The primary structure comprises 325 residues: ATPase GET3 (325 aa).

Residue 34-41 (KGGVGKTT) participates in ATP binding. D63 is an active-site residue. ATP contacts are provided by E243 and N270. The Zn(2+) site is built by C281 and C284.

The protein belongs to the arsA ATPase family. In terms of assembly, homodimer.

It localises to the cytoplasm. Its subcellular location is the endoplasmic reticulum. ATPase required for the post-translational delivery of tail-anchored (TA) proteins to the endoplasmic reticulum. Recognizes and selectively binds the transmembrane domain of TA proteins in the cytosol. This complex then targets to the endoplasmic reticulum by membrane-bound receptors, where the tail-anchored protein is released for insertion. This process is regulated by ATP binding and hydrolysis. ATP binding drives the homodimer towards the closed dimer state, facilitating recognition of newly synthesized TA membrane proteins. ATP hydrolysis is required for insertion. Subsequently, the homodimer reverts towards the open dimer state, lowering its affinity for the membrane-bound receptor, and returning it to the cytosol to initiate a new round of targeting. The protein is ATPase GET3 of Coccidioides posadasii (strain C735) (Valley fever fungus).